The chain runs to 566 residues: Beta,beta-carotene 15,15'-dioxygenase (566 aa).

The Fe cation site is built by His172, His237, His308, and His514. Positions 530–566 (PAETQEVENSDHPTDPTAPELSHSENDFTAGHGGSSL) are disordered.

Belongs to the carotenoid oxygenase family. It depends on Fe(2+) as a cofactor. In terms of tissue distribution, expressed in liver, kidney, small intestine and testis.

Its subcellular location is the cytoplasm. It is found in the cytosol. It carries out the reaction all-trans-beta-carotene + O2 = 2 all-trans-retinal. It functions in the pathway cofactor metabolism; retinol metabolism. Its function is as follows. Symmetrically cleaves beta-carotene into two molecules of retinal using a dioxygenase mechanism. The sequence is that of Beta,beta-carotene 15,15'-dioxygenase from Mus musculus (Mouse).